Consider the following 98-residue polypeptide: Toxin ParE1 (98 aa).

This sequence belongs to the RelE toxin family.

Toxic component of a type II toxin-antitoxin (TA) system. Its toxic effect is neutralized by coexpression with cognate antitoxin ParD1. The chain is Toxin ParE1 (parE1) from Mycobacterium tuberculosis (strain CDC 1551 / Oshkosh).